The following is a 1264-amino-acid chain: MWVNPEEVLLANALWITERANPYFILQRRKGHGGDGGGGGGLAGLLVGTLDVVLDSSARVAPYRILYQTPDSLVYWTIACGGSRKEVTEHWEWLEQNLLQTLSIFENENDVTTFVRGKIQGIIAEYNKINDVKEDEDTEKFKEAIVKFHRLFGMPEEEKLVNYYSCSYWKGRVPRQGWMYLSINHLCFSSFLMGREAKLVIRWVDITQLEKNATLLLPDMIKVSTRSSEHFFSVFLNINETFKLMEQLANIAMRQLLDNEGFEQDRSLPKLKKKSPKKVSALKRDLDARAKSERYRALFRLPKDEKLDGHTDCTLWTPFNKMHILGQMFVSTNYICFTSKEENLCSLIIPLREVTIVEKADSCSVLPSPLSISTRNRMTFLFANLKDRDFLVQRISDFLQQTTSRIYSDKEFSGSCNSSDDEVYSRPSSLVSSSPQRSTSSDADGERPFNLNGNSVPTATQTLMTMYRRRSPEEFNPKLAKEFLKEQAWKIHFAEYGQGICMYRTEKTRELVLKGIPESMRGELWLLLSGAINEKATHPGYYEGLVEKSMGKYNLATEEIERDLHRSLPEHPAFQNEMGIAALRRVLTAYAFRNPNIGYCQAMNIVTSVLLLYAKEEEAFWLLVALCERMLPDYYNTRVVGALVDQGVFEELARDYVPQLYDCMQDLGVISTISLSWFLTLFLSVMPFESAVVVVDCFFYEGIKVIFQLALAVLDANVDKLLNCKDDGEAMTVLGRYLDSVTNKDSTLPPIPHLHSLLSDDVGPYPAVDIFRLIGTSYEKFGTIRADLIEQMRFKQRLKVIQTLEDTTKRNVVRTIVTETSFTIDELEELYALFKAEHLTSCYWGGSSNALDRHDPSLPYLEQYRIDFEQFKGMFVLLFPWACGTHSDVLASRLFQLLDENGDSLINFREFVSGLSAACHGDLTEKLKLLYKMHVLPEPSCDQDEPDSAFEATQYFFEDITPECTHVVGLDSRGKQSADDGFVTVSLKQDRGKRANSQENRNYLKLWTAENKSKSKTAKDLPKLNQGQFIELCKTMYNMFSEDPNEQELYHATAAVTSLLLEIGEVGKFFITQPAKEDAVPGPPCGQAIPGMLFPKKGSSQSYVVESTEPLTASLAVDSEEHSLGGQMEDIKLEDSSPRDNGACSSMLISDDDTKDDSSMSSYSVLSAGSHEEDKLHCEDIGEDTVLVRSSQGRATLPRSSSLDRDWAITFEQFLASLLTEPALVRYFDKPVCMMARVTSAKNIRMMGKPLTSASDYEISALSG.

GRAM domains lie at 146–213 and 293–361; these read VKFH…EKNA and ERYR…EKAD. Residues 410 to 456 are disordered; it reads KEFSGSCNSSDDEVYSRPSSLVSSSPQRSTSSDADGERPFNLNGNSV. The segment covering 425–441 has biased composition (low complexity); sequence SRPSSLVSSSPQRSTSS. One can recognise a Rab-GAP TBC domain in the interval 515 to 702; it reads GIPESMRGEL…VVVDCFFYEG (188 aa). The EF-hand domain occupies 886–921; sequence HSDVLASRLFQLLDENGDSLINFREFVSGLSAACHG. Residues 1119–1138 show a composition bias toward basic and acidic residues; it reads SEEHSLGGQMEDIKLEDSSP. Residues 1119–1162 form a disordered region; it reads SEEHSLGGQMEDIKLEDSSPRDNGACSSMLISDDDTKDDSSMSS.

In terms of biological role, may act as a GTPase-activating protein for Rab family protein(s). The polypeptide is TBC1 domain family member 9 (Tbc1d9) (Mus musculus (Mouse)).